Consider the following 160-residue polypeptide: Type IV major fimbrial protein FimA (160 aa).

A propeptide spans 1-7 (MKSLQKG) (leader sequence). Residue phenylalanine 8 is modified to N-methylphenylalanine. A helical membrane pass occupies residues 8 to 28 (FTLIELMIVVAIIGILAAFAI). Residues cysteine 63 and cysteine 106 are joined by a disulfide bond.

It belongs to the N-Me-Phe pilin family. As to quaternary structure, the pili are polar flexible filaments of about 5.4 nanometers diameter and 2.5 micrometers average length; they consist of only a single polypeptide chain arranged in a helical configuration of five subunits per turn in the assembled pilus.

It is found in the fimbrium. The protein localises to the membrane. Functionally, major component of the type IV fimbriae that plays an essential role in twitching motility, natural transformation, and protease secretion. The sequence is that of Type IV major fimbrial protein FimA (fimA) from Dichelobacter nodosus (Bacteroides nodosus).